A 567-amino-acid polypeptide reads, in one-letter code: Dihydroxy-acid dehydratase 2 (567 aa).

C56 serves as a coordination point for [2Fe-2S] cluster. D88 is a Mg(2+) binding site. C129 contacts [2Fe-2S] cluster. The Mg(2+) site is built by D130 and K131. Position 131 is an N6-carboxylysine (K131). C206 serves as a coordination point for [2Fe-2S] cluster. E457 contributes to the Mg(2+) binding site. S483 acts as the Proton acceptor in catalysis.

Belongs to the IlvD/Edd family. Homodimer. Requires [2Fe-2S] cluster as cofactor. Mg(2+) is required as a cofactor.

It carries out the reaction (2R)-2,3-dihydroxy-3-methylbutanoate = 3-methyl-2-oxobutanoate + H2O. The enzyme catalyses (2R,3R)-2,3-dihydroxy-3-methylpentanoate = (S)-3-methyl-2-oxopentanoate + H2O. The protein operates within amino-acid biosynthesis; L-isoleucine biosynthesis; L-isoleucine from 2-oxobutanoate: step 3/4. It functions in the pathway amino-acid biosynthesis; L-valine biosynthesis; L-valine from pyruvate: step 3/4. Functionally, functions in the biosynthesis of branched-chain amino acids. Catalyzes the dehydration of (2R,3R)-2,3-dihydroxy-3-methylpentanoate (2,3-dihydroxy-3-methylvalerate) into 2-oxo-3-methylpentanoate (2-oxo-3-methylvalerate) and of (2R)-2,3-dihydroxy-3-methylbutanoate (2,3-dihydroxyisovalerate) into 2-oxo-3-methylbutanoate (2-oxoisovalerate), the penultimate precursor to L-isoleucine and L-valine, respectively. The protein is Dihydroxy-acid dehydratase 2 of Corynebacterium efficiens (strain DSM 44549 / YS-314 / AJ 12310 / JCM 11189 / NBRC 100395).